The chain runs to 479 residues: Sulfate adenylyltransferase subunit 1 (479 aa).

The region spanning 25–239 is the tr-type G domain; that stretch reads KSLLRFLTCG…EVLETVDIQR (215 aa). The tract at residues 34 to 41 is G1; that stretch reads GSVDDGKS. 34 to 41 contacts GTP; that stretch reads GSVDDGKS. The tract at residues 92–96 is G2; that stretch reads GITID. The interval 113 to 116 is G3; that stretch reads DTPG. GTP is bound by residues 113–117 and 168–171; these read DTPGH and NKMD. The tract at residues 168–171 is G4; it reads NKMD. The interval 206–208 is G5; it reads SAL.

It belongs to the TRAFAC class translation factor GTPase superfamily. Classic translation factor GTPase family. CysN/NodQ subfamily. As to quaternary structure, heterodimer composed of CysD, the smaller subunit, and CysN.

The catalysed reaction is sulfate + ATP + H(+) = adenosine 5'-phosphosulfate + diphosphate. It participates in sulfur metabolism; hydrogen sulfide biosynthesis; sulfite from sulfate: step 1/3. In terms of biological role, with CysD forms the ATP sulfurylase (ATPS) that catalyzes the adenylation of sulfate producing adenosine 5'-phosphosulfate (APS) and diphosphate, the first enzymatic step in sulfur assimilation pathway. APS synthesis involves the formation of a high-energy phosphoric-sulfuric acid anhydride bond driven by GTP hydrolysis by CysN coupled to ATP hydrolysis by CysD. The chain is Sulfate adenylyltransferase subunit 1 from Salmonella agona (strain SL483).